We begin with the raw amino-acid sequence, 111 residues long: Nucleoid-associated protein PputGB1_3833 (111 aa).

Disordered stretches follow at residues 1–25 (MMKG…KMQE) and 87–111 (EQSS…KMPF).

This sequence belongs to the YbaB/EbfC family. In terms of assembly, homodimer.

The protein resides in the cytoplasm. The protein localises to the nucleoid. In terms of biological role, binds to DNA and alters its conformation. May be involved in regulation of gene expression, nucleoid organization and DNA protection. This Pseudomonas putida (strain GB-1) protein is Nucleoid-associated protein PputGB1_3833.